The chain runs to 217 residues: Segregation and condensation protein B (217 aa).

It belongs to the ScpB family. As to quaternary structure, homodimer. Homodimerization may be required to stabilize the binding of ScpA to the Smc head domains. Component of a cohesin-like complex composed of ScpA, ScpB and the Smc homodimer, in which ScpA and ScpB bind to the head domain of Smc. The presence of the three proteins is required for the association of the complex with DNA.

It localises to the cytoplasm. Functionally, participates in chromosomal partition during cell division. May act via the formation of a condensin-like complex containing Smc and ScpA that pull DNA away from mid-cell into both cell halves. This Geobacillus kaustophilus (strain HTA426) protein is Segregation and condensation protein B.